The following is a 1404-amino-acid chain: DNA-directed RNA polymerase subunit beta' (1404 aa).

Residues cysteine 70, cysteine 72, cysteine 85, and cysteine 88 each coordinate Zn(2+). Mg(2+) is bound by residues aspartate 460, aspartate 462, and aspartate 464. Cysteine 814, cysteine 889, cysteine 896, and cysteine 899 together coordinate Zn(2+). A disordered region spans residues 1377 to 1404 (DSEMETLSGKPAAAEPVAAVADAGADEE). Residues 1387-1404 (PAAAEPVAAVADAGADEE) show a composition bias toward low complexity.

Belongs to the RNA polymerase beta' chain family. In terms of assembly, the RNAP catalytic core consists of 2 alpha, 1 beta, 1 beta' and 1 omega subunit. When a sigma factor is associated with the core the holoenzyme is formed, which can initiate transcription. Mg(2+) is required as a cofactor. It depends on Zn(2+) as a cofactor.

The catalysed reaction is RNA(n) + a ribonucleoside 5'-triphosphate = RNA(n+1) + diphosphate. In terms of biological role, DNA-dependent RNA polymerase catalyzes the transcription of DNA into RNA using the four ribonucleoside triphosphates as substrates. This Xanthomonas euvesicatoria pv. vesicatoria (strain 85-10) (Xanthomonas campestris pv. vesicatoria) protein is DNA-directed RNA polymerase subunit beta'.